Here is an 84-residue protein sequence, read N- to C-terminus: uncharacterized protein (84 aa).

2 helical membrane-spanning segments follow: residues isoleucine 27–leucine 47 and isoleucine 52–isoleucine 72.

It to M.tuberculosis Rv2876.

It localises to the cell membrane. This is an uncharacterized protein from Mycobacterium leprae (strain TN).